Here is a 410-residue protein sequence, read N- to C-terminus: Lissencephaly-1 homolog (410 aa).

The LisH domain occupies 7-39 (QRDELNRAIADYLRSNGYEEAYSVFKKEAELDV). Residues 56–82 (TSVIRLQKKVMELESKLNEAKEEFTSG) adopt a coiled-coil conformation. WD repeat units follow at residues 106-147 (GHRS…RTLK), 148-187 (GHTD…CIRT), 190-229 (GHDH…CVKT), 232-271 (GHRE…CKAE), 274-333 (EHEH…CLMT), 336-377 (GHDN…KTLN), and 378-410 (AHEH…WECR).

The protein belongs to the WD repeat LIS1/nudF family. Can self-associate. Component of the cytosolic PAF-AH (I) heterotetrameric enzyme, which is composed of PAFAH1B1 (beta), PAFAH1B2 (alpha2) and PAFAH1B3 (alpha1) subunits. The catalytic activity of the enzyme resides in the alpha1 (PAFAH1B3) and alpha2 (PAFAH1B2) subunits, whereas the beta subunit (PAFAH1B1) has regulatory activity. Trimer formation is not essential for the catalytic activity. Interacts with dynein, dynactin, NDE1 and NDEL1.

It localises to the cytoplasm. It is found in the cytoskeleton. The protein resides in the microtubule organizing center. Its subcellular location is the centrosome. Its function is as follows. Regulatory subunit (beta subunit) of the cytosolic type I platelet-activating factor (PAF) acetylhydrolase (PAF-AH (I)), an enzyme that catalyzes the hydrolyze of the acetyl group at the sn-2 position of PAF and its analogs and participates in PAF inactivation. Regulates the PAF-AH (I) activity in a catalytic dimer composition-dependent manner. Positively regulates the activity of the minus-end directed microtubule motor protein dynein. May enhance dynein-mediated microtubule sliding by targeting dynein to the microtubule plus end. Required for several dynein- and microtubule-dependent processes such as the maintenance of Golgi integrity, the peripheral transport of microtubule fragments and the coupling of the nucleus and centrosome. May be required for proliferation of neuronal precursors and neuronal migration. This Gallus gallus (Chicken) protein is Lissencephaly-1 homolog.